We begin with the raw amino-acid sequence, 278 residues long: Sulfur carrier protein FdhD (278 aa).

Catalysis depends on C121, which acts as the Cysteine persulfide intermediate. Residue F260–R265 coordinates Mo-bis(molybdopterin guanine dinucleotide).

This sequence belongs to the FdhD family.

It is found in the cytoplasm. In terms of biological role, required for formate dehydrogenase (FDH) activity. Acts as a sulfur carrier protein that transfers sulfur from IscS to the molybdenum cofactor prior to its insertion into FDH. The polypeptide is Sulfur carrier protein FdhD (Escherichia coli O127:H6 (strain E2348/69 / EPEC)).